The following is a 252-amino-acid chain: Small ribosomal subunit protein uS2 (252 aa).

The tract at residues 231–252 is disordered; it reads SVESTAQEQVEETAQEETAVEA. Residues 239-252 show a composition bias toward acidic residues; sequence QVEETAQEETAVEA.

It belongs to the universal ribosomal protein uS2 family.

This chain is Small ribosomal subunit protein uS2, found in Acetivibrio thermocellus (strain ATCC 27405 / DSM 1237 / JCM 9322 / NBRC 103400 / NCIMB 10682 / NRRL B-4536 / VPI 7372) (Clostridium thermocellum).